The chain runs to 901 residues: Protein translocase subunit SecA (901 aa).

ATP contacts are provided by residues glutamine 87, 105-109 (GEGKT), and aspartate 512. The interval 858-891 (SHQDDDTAAAAALAAQTGDRKVGRNDPCPCGSGK) is disordered. Residues cysteine 885, cysteine 887, cysteine 896, and histidine 897 each coordinate Zn(2+).

Belongs to the SecA family. As to quaternary structure, monomer and homodimer. Part of the essential Sec protein translocation apparatus which comprises SecA, SecYEG and auxiliary proteins SecDF-YajC and YidC. Requires Zn(2+) as cofactor.

The protein resides in the cell inner membrane. It localises to the cytoplasm. It catalyses the reaction ATP + H2O + cellular proteinSide 1 = ADP + phosphate + cellular proteinSide 2.. Functionally, part of the Sec protein translocase complex. Interacts with the SecYEG preprotein conducting channel. Has a central role in coupling the hydrolysis of ATP to the transfer of proteins into and across the cell membrane, serving both as a receptor for the preprotein-SecB complex and as an ATP-driven molecular motor driving the stepwise translocation of polypeptide chains across the membrane. This Escherichia fergusonii (strain ATCC 35469 / DSM 13698 / CCUG 18766 / IAM 14443 / JCM 21226 / LMG 7866 / NBRC 102419 / NCTC 12128 / CDC 0568-73) protein is Protein translocase subunit SecA.